The sequence spans 291 residues: Probable cell wall amidase LytH (291 aa).

The signal sequence occupies residues 1-40 (MKKIDSWLTKHGLKNRLTLVVIVIFIIFLILLFMFVNLSD). Positions 41–105 (EDTGQITITE…WVAGWHTNLN (65 aa)) constitute an SH3b domain. Residues 122–286 (IVLDPGHGGS…VEQAIVDGLK (165 aa)) form the MurNAc-LAA domain. Residues 123–147 (VLDPGHGGSDQGASSSTPSKSLEKN) are disordered. The segment covering 133-142 (QGASSSTPSK) has biased composition (polar residues).

This sequence belongs to the N-acetylmuramoyl-L-alanine amidase 3 family.

The protein resides in the secreted. Probably involved in cell-wall metabolism. In Staphylococcus epidermidis (strain ATCC 35984 / DSM 28319 / BCRC 17069 / CCUG 31568 / BM 3577 / RP62A), this protein is Probable cell wall amidase LytH (lytH).